The sequence spans 79 residues: Eumenine mastoparan-OD (79 aa).

An N-terminal signal peptide occupies residues methionine 1–alanine 24. AXPX repeat units follow at residues alanine 24 to leucine 27, alanine 30 to alanine 33, alanine 44 to isoleucine 47, alanine 52 to glutamate 55, and alanine 58 to glutamate 61. The propeptide occupies glutamate 25–alanine 62. Leucine 76 is subject to Leucine amide.

Expressed by the venom gland.

It localises to the secreted. The protein resides in the target cell membrane. Antimicrobial peptide with strong activity against the fungi C.albicans (MIC=6 uM) and B.cinerea (MIC=10 uM), and weaker activity against the Gram-negative bacterium E.coli (MIC=97 uM) and Gram-positive bacterium S.aureus (MIC=97 uM). Shows cytolytic activity against insect cell lines. Has potent hemolytic activity against ovine erythrocytes (80% at 50 uM), but has no hemolytic activity against human erythrocytes. In vivo, peptide injection in the vicinity of the head and thorax of lepidopteran larvae induces feeding disorder that lasts one or two days before recovering. This is Eumenine mastoparan-OD from Orancistrocerus drewseni (Solitary wasp).